The primary structure comprises 1124 residues: Phytochrome type A (1124 aa).

Residues 1 to 19 show a composition bias toward low complexity; it reads MSTTRPSQSSNNSGRSRNS. Residues 1–21 form a disordered region; it reads MSTTRPSQSSNNSGRSRNSAR. Positions 218–401 constitute a GAF domain; the sequence is SMERLCDTMV…VFAIHVNKEI (184 aa). Cys323 is a binding site for phytochromobilin. 2 consecutive PAS domains span residues 617–687 and 750–821; these read VTSE…LQGE and DYKA…VNFG. A Histidine kinase domain is found at 901–1120; sequence YMKRQIRNPL…ILSVELAAAH (220 aa).

The protein belongs to the phytochrome family. As to quaternary structure, homodimer. Contains one covalently linked phytochromobilin chromophore.

Its function is as follows. Regulatory photoreceptor which exists in two forms that are reversibly interconvertible by light: the Pr form that absorbs maximally in the red region of the spectrum and the Pfr form that absorbs maximally in the far-red region. Photoconversion of Pr to Pfr induces an array of morphogenic responses, whereas reconversion of Pfr to Pr cancels the induction of those responses. Pfr controls the expression of a number of nuclear genes including those encoding the small subunit of ribulose-bisphosphate carboxylase, chlorophyll A/B binding protein, protochlorophyllide reductase, rRNA, etc. It also controls the expression of its own gene(s) in a negative feedback fashion. In Lathyrus sativus (White vetchling), this protein is Phytochrome type A (PHYA).